The primary structure comprises 104 residues: Guanyl-specific ribonuclease Ap1 (104 aa).

Cystine bridges form between Cys-2–Cys-10 and Cys-6–Cys-103. His-40 is a catalytic residue. The Proton acceptor role is filled by Glu-58. His-92 (proton donor) is an active-site residue.

It belongs to the ribonuclease N1/T1 family.

The protein resides in the secreted. The catalysed reaction is [RNA] containing guanosine + H2O = an [RNA fragment]-3'-guanosine-3'-phosphate + a 5'-hydroxy-ribonucleotide-3'-[RNA fragment].. The sequence is that of Guanyl-specific ribonuclease Ap1 from Aspergillus pallidus.